The chain runs to 630 residues: uncharacterized protein (630 aa).

2 helical membrane-spanning segments follow: residues 8-28 (LFNM…ASAV) and 258-278 (VDNS…PLVI). The segment at 399-426 (EETSKPTEQPSPADSTSTPAAPEKGAAS) is disordered. Polar residues predominate over residues 404 to 417 (PTEQPSPADSTSTP).

The protein belongs to the peptidase S1C family.

It is found in the cell membrane. This is an uncharacterized protein from Sinorhizobium fredii (strain NBRC 101917 / NGR234).